A 363-amino-acid chain; its full sequence is Peroxidase (363 aa).

An N-terminal signal peptide occupies residues 1–20 (MKLSLLSTFAAVIIGALALP). The residue at position 21 (Gln-21) is a Pyrrolidone carboxylic acid. 4 disulfides stabilise this stretch: Cys-31/Cys-43, Cys-42/Cys-312, Cys-62/Cys-148, and Cys-276/Cys-341. The Proton acceptor role is filled by His-75. Ca(2+)-binding residues include Asp-76, Gly-94, Asp-96, and Ser-98. Asn-162 carries an N-linked (GlcNAc...) (high mannose) asparagine glycan. Heme b is bound at residue His-203. Ca(2+) is bound by residues Ser-204, Asp-221, Thr-223, Val-226, and Asp-228. Ser-358 carries an O-linked (Man...) serine glycan.

This sequence belongs to the peroxidase family. Ligninase subfamily. Ca(2+) serves as cofactor. Requires heme b as cofactor.

It is found in the secreted. The enzyme catalyses 2 a phenolic donor + H2O2 = 2 a phenolic radical donor + 2 H2O. The polypeptide is Peroxidase (CIP1) (Coprinopsis cinerea (strain Okayama-7 / 130 / ATCC MYA-4618 / FGSC 9003) (Inky cap fungus)).